The chain runs to 393 residues: Lysophosphatidic acid receptor 1 (393 aa).

The Extracellular segment spans residues 1-50 (MAAASTSSPVVSQPQFTAMNEPQCFYNESIAFFYNRSGKYLATEWNTVSK). 2 disulfides stabilise this stretch: cysteine 24-cysteine 190 and cysteine 188-cysteine 195. 2 N-linked (GlcNAc...) asparagine glycosylation sites follow: asparagine 27 and asparagine 35. An a 1-acyl-sn-glycero-3-phosphate-binding site is contributed by lysine 39. Residues 51–75 (LVMGLGITVCIFIMLANLLVMVAIY) traverse the membrane as a helical segment. Over 76 to 83 (VNRRFHFP) the chain is Cytoplasmic. A helical transmembrane segment spans residues 84–107 (IYYLMANLAAADFFAGLAYFYLMF). Residues 108–121 (NTGPNTRRLTVSTW) are Extracellular-facing. Residues 122 to 144 (LLRQGLIDTTVTASVANLLAIAI) traverse the membrane as a helical segment. Residue 124–129 (RQGLID) coordinates a 1-acyl-sn-glycero-3-phosphate. At 145–163 (ERHITVFRMQLHTRMSNRR) the chain is on the cytoplasmic side. The helical transmembrane segment at 164–184 (VVVVIVVIWTMAIVMGAIPSV) threads the bilayer. Over 185 to 204 (GWNCICDIENCSNMAPLYSD) the chain is Extracellular. A helical transmembrane segment spans residues 205–225 (SYLVFWAIFNLVTFVVMVVLY). An a 1-acyl-sn-glycero-3-phosphate-binding site is contributed by tryptophan 210. Topologically, residues 226–255 (AHIFGYVRQRTMRMSRHSSGPRRNRDTMMS) are cytoplasmic. Residues 256–280 (LLKTVVIVLGAFIICWTPGLVLLLL) traverse the membrane as a helical segment. Residues 281 to 294 (DVCCPQCDVLAYEK) are Extracellular-facing. A disulfide bridge connects residues cysteine 284 and cysteine 287. Residues 295–315 (FFLLLAEFNSAMNPIIYSYRD) traverse the membrane as a helical segment. Residues 316-393 (KEMSATFRQI…PPERPGQGRV (78 aa)) are Cytoplasmic-facing. Residue serine 341 is modified to Phosphoserine. Threonine 351 carries the post-translational modification Phosphothreonine. Basic and acidic residues predominate over residues 369-381 (KMRGGHHLLRDEQ). The interval 369–393 (KMRGGHHLLRDEQPPPPERPGQGRV) is disordered.

The protein belongs to the G-protein coupled receptor 1 family. Interacts with RALA and GRK2. Interacts with GNAQ and GNA13. Interacts with CD14; the interaction is enhanced by exposure to bacterial lipopolysaccharide (LPS). N-glycosylated. Detected in brain cortex and in pituitary pars tuberalis.

It is found in the cell surface. The protein localises to the cell membrane. The protein resides in the endosome. Receptor for lysophosphatidic acid (LPA). Plays a role in the reorganization of the actin cytoskeleton, cell migration, differentiation and proliferation, and thereby contributes to the responses to tissue damage and infectious agents. Activates downstream signaling cascades via the G(i)/G(o), G(12)/G(13), and G(q) families of heteromeric G proteins. Signaling inhibits adenylyl cyclase activity and decreases cellular cAMP levels. Signaling triggers an increase of cytoplasmic Ca(2+) levels. Activates RALA; this leads to the activation of phospholipase C (PLC) and the formation of inositol 1,4,5-trisphosphate. Signaling mediates activation of down-stream MAP kinases. Contributes to the regulation of cell shape. Promotes Rho-dependent reorganization of the actin cytoskeleton in neuronal cells and neurite retraction. Promotes the activation of Rho and the formation of actin stress fibers. Promotes formation of lamellipodia at the leading edge of migrating cells via activation of RAC1. Through its function as LPA receptor, plays a role in chemotaxis and cell migration, including responses to injury and wounding. Plays a role in triggering inflammation in response to bacterial lipopolysaccharide (LPS) via its interaction with CD14. Promotes cell proliferation in response to LPA. Inhibits the intracellular ciliogenesis pathway in response to LPA and through AKT1 activation. Required for normal skeleton development. May play a role in osteoblast differentiation. Required for normal brain development. Required for normal proliferation, survival and maturation of newly formed neurons in the adult dentate gyrus. Plays a role in pain perception and in the initiation of neuropathic pain. This chain is Lysophosphatidic acid receptor 1 (LPAR1), found in Ovis aries (Sheep).